The following is an 855-amino-acid chain: Suppressor of tumorigenicity 14 protein homolog (855 aa).

The Cytoplasmic portion of the chain corresponds to 1-55; sequence MGSNRGRKAGGGSQDFGAGLKYNSRLENMNGFEEGVEFLPANNAKKVEKRGPRRW. The residue at position 13 (S13) is a Phosphoserine. A helical; Signal-anchor for type II membrane protein membrane pass occupies residues 56 to 76; sequence VVLVAVLFSFLLLSLMAGLLV. Over 77 to 855 the chain is Extracellular; that stretch reads WHFHYRNVRV…RDWIKEHTGV (779 aa). The SEA domain occupies 86 to 203; the sequence is VQKVFNGHLR…TSVVAFPIDP (118 aa). N-linked (GlcNAc...) asparagine glycosylation occurs at N107. A disulfide bond links C214 and C244. 2 consecutive CUB domains span residues 214 to 331 and 340 to 444; these read CSFA…EATF and CGGF…LAEY. N-linked (GlcNAc...) asparagine glycosylation is found at N302 and N365. Cystine bridges form between C340-C366 and C397-C410. An N-linked (GlcNAc...) asparagine glycan is attached at N421. LDL-receptor class A domains follow at residues 451–488, 489–522, 523–561, and 565–604; these read DPCP…YCRC, NATH…DEEG, CSCP…SCDS, and VSCT…NCDC. Disulfide bonds link C453/C464, C459/C477, C471/C486, C488/C501, C496/C514, C508/C523, C525/C537, C532/C550, C544/C559, C567/C579, C574/C593, C587/C602, and C641/C657. N-linked (GlcNAc...) asparagine glycosylation is present at N489. In terms of domain architecture, Peptidase S1 spans 615-854; sequence VVGGTNADEG…VRDWIKEHTG (240 aa). Catalysis depends on charge relay system residues H656 and D711. N-linked (GlcNAc...) asparagine glycosylation occurs at N772. Intrachain disulfides connect C776/C790 and C801/C830. S805 functions as the Charge relay system in the catalytic mechanism.

The protein belongs to the peptidase S1 family. As to quaternary structure, interacts with CDCP1. May interact with TMEFF1. Highly expressed in intestine, kidney, lung, and thymus. Not expressed in skeletal muscle, liver, heart, testis and brain.

It is found in the membrane. The catalysed reaction is Cleaves various synthetic substrates with Arg or Lys at the P1 position and prefers small side-chain amino acids, such as Ala and Gly, at the P2 position.. Exhibits trypsin-like activity as defined by cleavage of synthetic substrates with Arg or Lys as the P1 site. Involved in the terminal differentiation of keratinocytes through prostasin (PRSS8) activation and filaggrin (FLG) processing. Proteolytically cleaves and therefore activates TMPRSS13. In Mus musculus (Mouse), this protein is Suppressor of tumorigenicity 14 protein homolog (St14).